The primary structure comprises 195 residues: MEDIKSLIAGVDEVGKGCLFGPVFAAAVILSKKNEIELLNQGLKDSKKLSQRQRHNLVPLIKTNSIAWTIGQASAREIDVMGIRDATEKAMLRALEKFSSPPDLILVDGILPIRLWPGKQKTQVRGESHFASIAAASVLAKETRDELIKRLARKYNCYGLEKNKGYGTEIHRTKLIKEGATKLHRKSFISRLKKN.

The RNase H type-2 domain maps to 6 to 195 (SLIAGVDEVG…KSFISRLKKN (190 aa)). Positions 12, 13, and 108 each coordinate a divalent metal cation.

Belongs to the RNase HII family. Mn(2+) serves as cofactor. It depends on Mg(2+) as a cofactor.

Its subcellular location is the cytoplasm. It carries out the reaction Endonucleolytic cleavage to 5'-phosphomonoester.. In terms of biological role, endonuclease that specifically degrades the RNA of RNA-DNA hybrids. The chain is Ribonuclease HII from Prochlorococcus marinus (strain NATL2A).